Reading from the N-terminus, the 648-residue chain is Macrolide export ATP-binding/permease protein MacB (648 aa).

The ABC transporter domain maps to leucine 5–threonine 243. An ATP-binding site is contributed by glycine 41–serine 48. The next 4 membrane-spanning stretches (helical) occupy residues leucine 273–glycine 293, leucine 523–isoleucine 543, alanine 576–phenylalanine 596, and leucine 600–cysteine 620.

Belongs to the ABC transporter superfamily. Macrolide exporter (TC 3.A.1.122) family. In terms of assembly, homodimer. Part of the tripartite efflux system MacAB-TolC, which is composed of an inner membrane transporter, MacB, a periplasmic membrane fusion protein, MacA, and an outer membrane component, TolC. The complex forms a large protein conduit and can translocate molecules across both the inner and outer membranes. Interacts with MacA.

The protein localises to the cell inner membrane. Its function is as follows. Part of the tripartite efflux system MacAB-TolC. MacB is a non-canonical ABC transporter that contains transmembrane domains (TMD), which form a pore in the inner membrane, and an ATP-binding domain (NBD), which is responsible for energy generation. Confers resistance against macrolides. In Shigella flexneri, this protein is Macrolide export ATP-binding/permease protein MacB.